A 201-amino-acid chain; its full sequence is 3-isopropylmalate dehydratase small subunit (201 aa).

It belongs to the LeuD family. LeuD type 1 subfamily. Heterodimer of LeuC and LeuD.

The catalysed reaction is (2R,3S)-3-isopropylmalate = (2S)-2-isopropylmalate. Its pathway is amino-acid biosynthesis; L-leucine biosynthesis; L-leucine from 3-methyl-2-oxobutanoate: step 2/4. Functionally, catalyzes the isomerization between 2-isopropylmalate and 3-isopropylmalate, via the formation of 2-isopropylmaleate. The sequence is that of 3-isopropylmalate dehydratase small subunit from Cytophaga hutchinsonii (strain ATCC 33406 / DSM 1761 / CIP 103989 / NBRC 15051 / NCIMB 9469 / D465).